The following is a 374-amino-acid chain: Gustatory receptor 23a (374 aa).

The Cytoplasmic segment spans residues 1-6 (MFPPTR). The helical transmembrane segment at 7 to 27 (VQASSRVVLKIFHFILVAFSL) threads the bilayer. Residues 28 to 36 (RSRRLSRLV) are Extracellular-facing. A helical transmembrane segment spans residues 37–57 (LWLQFLGWLTWFISMWTQSVI). Residues 58 to 72 (YAQTIDCTLDCSLRH) are Cytoplasmic-facing. A helical transmembrane segment spans residues 73–93 (ILTFFQTVSHAFIVVTSFLDG). The Extracellular segment spans residues 94–112 (FRIKQDQLDEPIAFEDSDP). The helical transmembrane segment at 113–133 (WLAFTVLAMLVPTLGVEYLVC) threads the bilayer. At 134–226 (SNAPEYAFRI…YNDLHYLFVR (93 aa)) the chain is on the cytoplasmic side. A helical transmembrane segment spans residues 227–247 (INGYFGGSLLTIIIVHFAIFV). Residues 248–263 (SNSYWLFVDIRTRPWR) are Extracellular-facing. Residues 264–284 (IYAILLNLGFIFNVALQMAAA) form a helical membrane-spanning segment. The Cytoplasmic segment spans residues 285-343 (CWHCQQSYNLGRQIGCLISKLVKPQGSKLYNDLVSEFSLQTLHQRFVVTAKDFFSLNLH). The chain crosses the membrane as a helical span at residues 344–364 (LLSSMFAAVVTYLVILIQFMF). Topologically, residues 365-374 (AERSSTRGSG) are extracellular.

The protein belongs to the insect chemoreceptor superfamily. Gustatory receptor (GR) family. Gr2a subfamily. As to expression, expressed in the adult labellar chemosensory neurons and labral sense organ. Expressed in neurons of the dorsal pharyngeal sense organ of larvae.

The protein localises to the cell membrane. Its function is as follows. Probable gustatory receptor which mediates acceptance or avoidance behavior, depending on its substrates. The polypeptide is Gustatory receptor 23a (Gr23a) (Drosophila melanogaster (Fruit fly)).